Reading from the N-terminus, the 374-residue chain is GDSL esterase/lipase At3g50400 (374 aa).

A signal peptide spans 1-26 (MKKSIFFVPVLVLFFFGSRFSRVASA). Residue Ser-41 is the Nucleophile of the active site. N-linked (GlcNAc...) asparagine glycosylation is found at Asn-104 and Asn-125. Active-site residues include Asp-339 and His-342.

Belongs to the 'GDSL' lipolytic enzyme family.

It localises to the secreted. The protein is GDSL esterase/lipase At3g50400 of Arabidopsis thaliana (Mouse-ear cress).